The following is a 156-amino-acid chain: Lipoprotein signal peptidase (156 aa).

Transmembrane regions (helical) follow at residues 5 to 25, 64 to 84, and 89 to 109; these read FKFI…DQWV, YLHL…KTLL, and IAFG…FIHG. Catalysis depends on residues Asp113 and Asp130. Residues 122–142 form a helical membrane-spanning segment; sequence NFAIFNVADVMINISVALILI.

It belongs to the peptidase A8 family.

The protein resides in the cell inner membrane. The catalysed reaction is Release of signal peptides from bacterial membrane prolipoproteins. Hydrolyzes -Xaa-Yaa-Zaa-|-(S,diacylglyceryl)Cys-, in which Xaa is hydrophobic (preferably Leu), and Yaa (Ala or Ser) and Zaa (Gly or Ala) have small, neutral side chains.. It functions in the pathway protein modification; lipoprotein biosynthesis (signal peptide cleavage). This protein specifically catalyzes the removal of signal peptides from prolipoproteins. This is Lipoprotein signal peptidase from Campylobacter jejuni subsp. jejuni serotype O:6 (strain 81116 / NCTC 11828).